Reading from the N-terminus, the 119-residue chain is Large ribosomal subunit protein bL20 (119 aa).

This sequence belongs to the bacterial ribosomal protein bL20 family.

Functionally, binds directly to 23S ribosomal RNA and is necessary for the in vitro assembly process of the 50S ribosomal subunit. It is not involved in the protein synthesizing functions of that subunit. This chain is Large ribosomal subunit protein bL20, found in Cellvibrio japonicus (strain Ueda107) (Pseudomonas fluorescens subsp. cellulosa).